A 224-amino-acid polypeptide reads, in one-letter code: Cytidylate kinase (224 aa).

Position 11–19 (11–19 (GPAAAGKST)) interacts with ATP.

It belongs to the cytidylate kinase family. Type 1 subfamily.

The protein resides in the cytoplasm. The enzyme catalyses CMP + ATP = CDP + ADP. The catalysed reaction is dCMP + ATP = dCDP + ADP. In Geobacillus thermodenitrificans (strain NG80-2), this protein is Cytidylate kinase.